The chain runs to 470 residues: Dihydrolipoyl dehydrogenase (470 aa).

Residues 39–47, K56, and A119 each bind FAD; that span reads EKATLGGVC. A disulfide bridge links C47 with C52. Residues 183–187, E206, and 272–275 contribute to the NAD(+) site; these read GGGYI and TVGR. 2 residues coordinate FAD: D315 and A323. H447 acts as the Proton acceptor in catalysis.

The protein belongs to the class-I pyridine nucleotide-disulfide oxidoreductase family. As to quaternary structure, homodimer. Component of two multienzyme complexes: pyruvate dehydrogenase complex and oxoglutarate dehydrogenase complex. FAD serves as cofactor.

The protein localises to the cytoplasm. The enzyme catalyses N(6)-[(R)-dihydrolipoyl]-L-lysyl-[protein] + NAD(+) = N(6)-[(R)-lipoyl]-L-lysyl-[protein] + NADH + H(+). In terms of biological role, catalyzes the oxidation of dihydrolipoamide to lipoamide. This is Dihydrolipoyl dehydrogenase (pdhD) from Bacillus subtilis (strain 168).